The primary structure comprises 377 residues: MSDTPTLALAKDLLSRQSITPEDAGCQELMIKQLEALGFTIEIMVFEDTTNFWARRGNKAPLFTFAGHTDVVPTGDLTHWNTNPFEPTIIDGMLYARGAADMKGSLACMVVAVERFVAEHPNHKGSISFLITSDEEGPFINGTTRVVDTLQERNEIIDMCIVGEPSSTAHVGDVVKNGRRGSLTGNLTVKGIQGHVAYPHIARNPIHQAMPALSELATTVWDNGNDYFPPTSFQIPNMNGGTGASNVIPGTVDIMFNFRFSTESTVDELQQRVVEILDKHDLEYELDWIINGLPFLTDTGDLLTAVVNAVDTVNQQKPQLLTTGGTSDGRFIAQMGSQVIELGPVNATIHKVNECVNVEDLEKLTDMYQEVLNNLLA.

Histidine 68 is a Zn(2+) binding site. Aspartate 70 is a catalytic residue. Aspartate 101 contacts Zn(2+). Catalysis depends on glutamate 135, which acts as the Proton acceptor. Residues glutamate 136, glutamate 164, and histidine 350 each contribute to the Zn(2+) site.

Belongs to the peptidase M20A family. DapE subfamily. As to quaternary structure, homodimer. The cofactor is Zn(2+). Co(2+) serves as cofactor.

It carries out the reaction N-succinyl-(2S,6S)-2,6-diaminopimelate + H2O = (2S,6S)-2,6-diaminopimelate + succinate. It participates in amino-acid biosynthesis; L-lysine biosynthesis via DAP pathway; LL-2,6-diaminopimelate from (S)-tetrahydrodipicolinate (succinylase route): step 3/3. Catalyzes the hydrolysis of N-succinyl-L,L-diaminopimelic acid (SDAP), forming succinate and LL-2,6-diaminopimelate (DAP), an intermediate involved in the bacterial biosynthesis of lysine and meso-diaminopimelic acid, an essential component of bacterial cell walls. This chain is Succinyl-diaminopimelate desuccinylase, found in Aliivibrio fischeri (strain ATCC 700601 / ES114) (Vibrio fischeri).